A 373-amino-acid chain; its full sequence is Muscleblind-like protein 2 (373 aa).

4 consecutive C3H1-type zinc fingers follow at residues 13 to 41 (WLTL…HPPK), 47 to 73 (NGRV…HPPT), 176 to 204 (TDKL…HPAD), and 212 to 238 (DNTV…HPPA).

The protein belongs to the muscleblind family. As to quaternary structure, interacts with ITGA3.

The protein localises to the nucleus. It localises to the cytoplasm. In terms of biological role, mediates pre-mRNA alternative splicing regulation. Acts either as activator or repressor of splicing on specific pre-mRNA targets. Inhibits cardiac troponin-T (TNNT2) pre-mRNA exon inclusion but induces insulin receptor (IR) pre-mRNA exon inclusion in muscle. Antagonizes the alternative splicing activity pattern of CELF proteins. RNA-binding protein that binds to 5'ACACCC-3' core sequence, termed zipcode, within the 3'UTR of ITGA3. Binds to CUG triplet repeat expansion in myotonic dystrophy muscle cells by sequestering the target RNAs. Together with RNA binding proteins RBPMS and RBFOX2, activates vascular smooth muscle cells alternative splicing events. Regulates NCOR2 alternative splicing. Seems to regulate expression and localization of ITGA3 by transporting it from the nucleus to cytoplasm at adhesion plaques. May play a role in myotonic dystrophy pathophysiology (DM). In Mus musculus (Mouse), this protein is Muscleblind-like protein 2 (Mbnl2).